We begin with the raw amino-acid sequence, 298 residues long: N-acetylmuramic acid 6-phosphate etherase (298 aa).

In terms of domain architecture, SIS spans 55–218 (IHAQVSGGGR…STGLMIKSGK (164 aa)). E83 functions as the Proton donor in the catalytic mechanism. The active site involves E114.

It belongs to the GCKR-like family. MurNAc-6-P etherase subfamily. As to quaternary structure, homodimer.

The enzyme catalyses N-acetyl-D-muramate 6-phosphate + H2O = N-acetyl-D-glucosamine 6-phosphate + (R)-lactate. It participates in amino-sugar metabolism; N-acetylmuramate degradation. Its pathway is amino-sugar metabolism; 1,6-anhydro-N-acetylmuramate degradation. It functions in the pathway cell wall biogenesis; peptidoglycan recycling. Functionally, specifically catalyzes the cleavage of the D-lactyl ether substituent of MurNAc 6-phosphate, producing GlcNAc 6-phosphate and D-lactate. Together with AnmK, is also required for the utilization of anhydro-N-acetylmuramic acid (anhMurNAc) either imported from the medium or derived from its own cell wall murein, and thus plays a role in cell wall recycling. The protein is N-acetylmuramic acid 6-phosphate etherase of Escherichia coli (strain K12 / MC4100 / BW2952).